Consider the following 359-residue polypeptide: Peptide chain release factor 1 (359 aa).

Gln235 is modified (N5-methylglutamine).

It belongs to the prokaryotic/mitochondrial release factor family. Methylated by PrmC. Methylation increases the termination efficiency of RF1.

Its subcellular location is the cytoplasm. In terms of biological role, peptide chain release factor 1 directs the termination of translation in response to the peptide chain termination codons UAG and UAA. The protein is Peptide chain release factor 1 of Methylibium petroleiphilum (strain ATCC BAA-1232 / LMG 22953 / PM1).